The primary structure comprises 728 residues: 1,4-alpha-glucan branching enzyme GlgB (728 aa).

Asp405 acts as the Nucleophile in catalysis. Glu458 acts as the Proton donor in catalysis.

This sequence belongs to the glycosyl hydrolase 13 family. GlgB subfamily. Monomer.

The enzyme catalyses Transfers a segment of a (1-&gt;4)-alpha-D-glucan chain to a primary hydroxy group in a similar glucan chain.. It participates in glycan biosynthesis; glycogen biosynthesis. In terms of biological role, catalyzes the formation of the alpha-1,6-glucosidic linkages in glycogen by scission of a 1,4-alpha-linked oligosaccharide from growing alpha-1,4-glucan chains and the subsequent attachment of the oligosaccharide to the alpha-1,6 position. The polypeptide is 1,4-alpha-glucan branching enzyme GlgB (Shigella flexneri).